The primary structure comprises 327 residues: Flotillin-like protein FloA (327 aa).

2 helical membrane-spanning segments follow: residues 8–28 and 29–49; these read VLLI…LVPI and PLWI…LVGM.

The protein belongs to the flotillin-like FloA family. In terms of assembly, homooligomerizes.

It is found in the cell membrane. It localises to the membrane raft. In terms of biological role, found in functional membrane microdomains (FMM) that may be equivalent to eukaryotic membrane rafts. FMMs are highly dynamic and increase in number as cells age. Flotillins are thought to be important factors in membrane fluidity. This Exiguobacterium sibiricum (strain DSM 17290 / CCUG 55495 / CIP 109462 / JCM 13490 / 255-15) protein is Flotillin-like protein FloA.